We begin with the raw amino-acid sequence, 527 residues long: Coproporphyrinogen III oxidase (527 aa).

Over residues 1–14 (MSTTDRVTTPTPTV) the composition is skewed to low complexity. Residues 1–23 (MSTTDRVTTPTPTVSGTDAPGPD) form a disordered region. FAD is bound by residues 33 to 38 (GGGITG), 56 to 57 (ES), K64, and 78 to 81 (GPDS). The interval 231–267 (RRAARQRAAQNNAQQNSSHQNSTGQNNSAGTRGPAAS) is disordered. Over residues 236 to 252 (QRAAQNNAQQNSSHQNS) the composition is skewed to low complexity. FAD-binding positions include V300, W448, and 487–489 (VGL).

This sequence belongs to the protoporphyrinogen/coproporphyrinogen oxidase family. Coproporphyrinogen III oxidase subfamily. The cofactor is FAD.

The protein resides in the cytoplasm. The catalysed reaction is coproporphyrinogen III + 3 O2 = coproporphyrin III + 3 H2O2. The protein operates within porphyrin-containing compound metabolism; protoheme biosynthesis. Involved in coproporphyrin-dependent heme b biosynthesis. Catalyzes the oxidation of coproporphyrinogen III to coproporphyrin III. The chain is Coproporphyrinogen III oxidase from Propionibacterium freudenreichii subsp. freudenreichii.